The sequence spans 365 residues: Glutamate 5-kinase 1 (365 aa).

An ATP-binding site is contributed by K9. Positions 49, 136, and 148 each coordinate substrate. Residues T168–D169 and T210–K216 each bind ATP. A PUA domain is found at S276–E353.

This sequence belongs to the glutamate 5-kinase family.

Its subcellular location is the cytoplasm. It carries out the reaction L-glutamate + ATP = L-glutamyl 5-phosphate + ADP. It functions in the pathway amino-acid biosynthesis; L-proline biosynthesis; L-glutamate 5-semialdehyde from L-glutamate: step 1/2. Catalyzes the transfer of a phosphate group to glutamate to form L-glutamate 5-phosphate. The sequence is that of Glutamate 5-kinase 1 from Bacillus subtilis (strain 168).